Here is a 124-residue protein sequence, read N- to C-terminus: Calvin cycle protein CP12-1, chloroplastic (124 aa).

Residues 1–47 (MTTIAAAGLNVATPRVVVRPVARVLGPVRLNYPWKFGSMKRMVVVKA) constitute a chloroplast transit peptide. Disulfide bonds link Cys68-Cys77 and Cys110-Cys119. Positions 90–124 (AASHARDKKKAGGSDPLEEYCNDNPETDECRTYDN) are disordered. Acidic residues predominate over residues 105–116 (PLEEYCNDNPET).

Belongs to the CP12 family. In terms of assembly, monomer. Component of a complex that contains two dimers of PRK, two tetramers of GAPDH and CP12. CP12 associates with GAPDH, causing its conformation to change. This GAPDH/CP12 complex binds PRK to form a half-complex (one unit). This unit probably dimerizes due partially to interactions between the enzymes of each unit. Post-translationally, contains two disulfide bonds; only the oxidized protein, with two disulfide bonds, is active in complex formation. The C-terminal disulfide is involved in the interaction with GAPDH and the N-terminal disulfide mediates the binding of PRK with this binary complex. In terms of tissue distribution, mostly expressed in flowers, hypocotyl, cotyledons, leaves, stems, and flower stalks. Barely detectable in roots and siliques. Present in root tips and lateral roots. Accumulates in the cotyledons of etiolated seedlings.

It localises to the plastid. It is found in the chloroplast. In terms of biological role, acts as a linker essential in the assembly of a core complex of PRK/GAPDH. Coordinates the reversible inactivation of chloroplast enzymes GAPDH and PRK during darkness in photosynthetic tissues. This chain is Calvin cycle protein CP12-1, chloroplastic (CP12-1), found in Arabidopsis thaliana (Mouse-ear cress).